Reading from the N-terminus, the 328-residue chain is Tetraacyldisaccharide 4'-kinase (328 aa).

Thr55 to Thr62 provides a ligand contact to ATP.

Belongs to the LpxK family.

The catalysed reaction is a lipid A disaccharide + ATP = a lipid IVA + ADP + H(+). Its pathway is glycolipid biosynthesis; lipid IV(A) biosynthesis; lipid IV(A) from (3R)-3-hydroxytetradecanoyl-[acyl-carrier-protein] and UDP-N-acetyl-alpha-D-glucosamine: step 6/6. In terms of biological role, transfers the gamma-phosphate of ATP to the 4'-position of a tetraacyldisaccharide 1-phosphate intermediate (termed DS-1-P) to form tetraacyldisaccharide 1,4'-bis-phosphate (lipid IVA). In Shigella flexneri serotype 5b (strain 8401), this protein is Tetraacyldisaccharide 4'-kinase.